We begin with the raw amino-acid sequence, 447 residues long: MKKTHINVIGAGLAGSEAAYQIAKRGIPVKLYEMRGVKQTPQHKTDKFAELVCSNSLRGAAITNAVGLLKEEMRRLDSVIIKAAEVTQVPAGGALAVDREGFSDFVTREVSNHPLVEVIREEITDLPEDEITIIATGPLTSDKLAEKIHEFNGADGFYFYDAAAPIIDANSINFDKVYKKSRYDKGEADYINCPMTKEEFQAFQEALISAEEAPLNSFEDLKVFEGCMPIEEMAKRGYKTMLFGPMKPVGLEYPEDYKGPRDGDFKTPYAVVQLRQDNASASLYNIVGFQTHLKWGEQKRVFQMIPGLENAEFVRYGVMHRNSYMDSPNLLKQTFQSRKQENLFFAGQMTGVEGYVESAASGLVAGINAVKLFNDEEVVIFPKTTAIGSLPYYITHTDSKHFQPMNVTFGIVEELEGPRIRDKKERYTKVAERALNSLTDIISKDNL.

10–15 lines the FAD pocket; the sequence is GAGLAG.

It belongs to the MnmG family. TrmFO subfamily. Requires FAD as cofactor.

It is found in the cytoplasm. The catalysed reaction is uridine(54) in tRNA + (6R)-5,10-methylene-5,6,7,8-tetrahydrofolate + NADH + H(+) = 5-methyluridine(54) in tRNA + (6S)-5,6,7,8-tetrahydrofolate + NAD(+). It catalyses the reaction uridine(54) in tRNA + (6R)-5,10-methylene-5,6,7,8-tetrahydrofolate + NADPH + H(+) = 5-methyluridine(54) in tRNA + (6S)-5,6,7,8-tetrahydrofolate + NADP(+). Its function is as follows. Catalyzes the folate-dependent formation of 5-methyl-uridine at position 54 (M-5-U54) in all tRNAs. The chain is Methylenetetrahydrofolate--tRNA-(uracil-5-)-methyltransferase TrmFO from Lactococcus lactis subsp. lactis (strain IL1403) (Streptococcus lactis).